Consider the following 286-residue polypeptide: uncharacterized protein (286 aa).

Belongs to the methyltransferase superfamily.

Involved in osmoadaptation. This is an uncharacterized protein from Emericella nidulans (strain FGSC A4 / ATCC 38163 / CBS 112.46 / NRRL 194 / M139) (Aspergillus nidulans).